Consider the following 414-residue polypeptide: uncharacterized protein (414 aa).

Disordered stretches follow at residues 136–168, 297–333, and 346–414; these read SSKSMTPTAEKQLEKPLENGSELQEGDSLTVPT, PQNFPNSGMQRAVQAPRPQNKMSYHRNNKNRNAENAS, and ALNA…NGSK. Residues 350–359 show a composition bias toward polar residues; it reads PSRSRPTHGS. Over residues 399–414 the composition is skewed to basic and acidic residues; it reads SKSEKIYPEPRRNGSK.

This is an uncharacterized protein from Homo sapiens (Human).